The sequence spans 748 residues: MSQWNQVQQLEIKFLEQVDQFYDDNFPMEIRHLLAQWIENQDWEAASNNETMATILLQNLLIQLDEQLGRVSKEKNLLLIHNLKRIRKVLQGKFHGNPMHVAVVISNCLREERRILAAANMPVQGPLEKSLQSSSVSERQRNVEHKVAAIKNSVQMTEQDTKYLEDLQDEFDYRYKTIQTMDQSDKNSAMVNQEVLTLQEMLNSLDFKRKEALSKMTQIIHETDLLMNTMLIEELQDWKRRQQIACIGGPLHNGLDQLQNCFTLLAESLFQLRRQLEKLEEQSTKMTYEGDPIPMQRTHMLERVTFLIYNLFKNSFVVERQPCMPTHPQRPLVLKTLIQFTVKLRLLIKLPELNYQVKVKASIDKNVSTLSNRRFVLCGTNVKAMSIEESSNGSLSVEFRHLQPKEMKSSAGGKGNEGCHMVTEELHSITFETQICLYGLTIDLETSSLPVVMISNVSQLPNAWASIIWYNVSTNDSQNLVFFNNPPPATLSQLLEVMSWQFSSYVGRGLNSDQLHMLAEKLTVQSSYSDGHLTWAKFCKEHLPGKSFTFWTWLEAILDLIKKHILPLWIDGYVMGFVSKEKERLLLKDKMPGTFLLRFSESHLGGITFTWVDHSESGEVRFHSVEPYNKGRLSALPFADILRDYKVIMAENIPENPLKYLYPDIPKDKAFGKHYSSQPCEVSRPTERGDKGYVPSVFIPISTIRSDSTEPHSPSDLLPMSPSVYAVLRENLSPTTIETAMKSPYSAE.

In terms of domain architecture, SH2 spans 569-664 (WIDGYVMGFV…ENPLKYLYPD (96 aa)). Residue K667 is modified to N6-acetyllysine. Y693 is modified (phosphotyrosine; by JAK). A Phosphoserine; by MAP2K6 modification is found at S721.

This sequence belongs to the transcription factor STAT family. In terms of assembly, forms a homodimer or a heterodimer with a related family member. Interacts with ARL2BP. The SH2 domain interacts, in vitro, with IL12RB2 via a short cytoplasmic domain. Interacts with STAT1. Interacts with JUN; this complex efficiently interacts with the AP-1-related sequence of the IFN-gamma. Acetylation at Lys-667 is required for JAK2-mediated phosphorylation and activation of STAT4. Post-translationally, tyrosine phosphorylated upon IL12 and IFN-alpha activation, but not by IFN-gamma in T-lymphocytes and NK cells. Serine phosphorylation is required for maximal transcriptional activity but not for DNA binding. Phosphorylation by MAP2K6 at Ser-721 is required for full transcriptional activity induced by IL12. However this serine phosphorylation is not required for cell proliferation although critical for IFN-gamma production.

Its subcellular location is the cytoplasm. It is found in the nucleus. Functionally, transcriptional regulator mainly expressed in hematopoietic cells that plays a critical role in cellular growth, differentiation and immune response. Plays a key role in the differentiation of T-helper 1 cells and the production of interferon-gamma. Also participates in multiple neutrophil functions including chemotaxis and production of the neutrophil extracellular traps. After IL12 binding to its receptor IL12RB2, STAT4 interacts with the intracellular domain of IL12RB2 and becomes tyrosine phosphorylated. Phosphorylated STAT4 then homodimerizes and migrates to the nucleus where it can recognize STAT target sequences present in IL12 responsive genes. Although IL12 appears to be the predominant activating signal, STAT4 can also be phosphorylated and activated in response to IFN-gamma stimulation via JAK1 and TYK2 and in response to different interleukins including IL23, IL2 and IL35. Transcription activation of IFN-gamma gene is mediated by interaction with JUN that forms a complex that efficiently interacts with the AP-1-related sequence of the IFN-gamma promoter. In response to IFN-alpha/beta signaling, acts as a transcriptional repressor and suppresses IL5 and IL13 mRNA expression during response to T-cell receptor (TCR) activation. The protein is Signal transducer and activator of transcription 4 (STAT4) of Homo sapiens (Human).